We begin with the raw amino-acid sequence, 513 residues long: ATP synthase subunit alpha (513 aa).

Residue 172–179 (GDRQTGKT) participates in ATP binding.

The protein belongs to the ATPase alpha/beta chains family. As to quaternary structure, F-type ATPases have 2 components, CF(1) - the catalytic core - and CF(0) - the membrane proton channel. CF(1) has five subunits: alpha(3), beta(3), gamma(1), delta(1), epsilon(1). CF(0) has three main subunits: a(1), b(2) and c(9-12). The alpha and beta chains form an alternating ring which encloses part of the gamma chain. CF(1) is attached to CF(0) by a central stalk formed by the gamma and epsilon chains, while a peripheral stalk is formed by the delta and b chains.

Its subcellular location is the cell inner membrane. The catalysed reaction is ATP + H2O + 4 H(+)(in) = ADP + phosphate + 5 H(+)(out). Produces ATP from ADP in the presence of a proton gradient across the membrane. The alpha chain is a regulatory subunit. The sequence is that of ATP synthase subunit alpha from Gluconacetobacter diazotrophicus (strain ATCC 49037 / DSM 5601 / CCUG 37298 / CIP 103539 / LMG 7603 / PAl5).